Reading from the N-terminus, the 394-residue chain is L-lactate dehydrogenase (394 aa).

Positions 1–380 (MIISAASDYR…SRDSLVQNAE (380 aa)) constitute an FMN hydroxy acid dehydrogenase domain. Substrate is bound at residue Y24. 2 residues coordinate FMN: S106 and Q127. Substrate is bound at residue Y129. T155 contributes to the FMN binding site. R164 is a substrate binding site. K251 serves as a coordination point for FMN. Catalysis depends on H275, which acts as the Proton acceptor. R278 contributes to the substrate binding site. 306–330 (DSGIRNGLDVVRMIALGADSVLLGR) serves as a coordination point for FMN.

This sequence belongs to the FMN-dependent alpha-hydroxy acid dehydrogenase family. Requires FMN as cofactor.

It is found in the cell inner membrane. It carries out the reaction (S)-lactate + A = pyruvate + AH2. Catalyzes the conversion of L-lactate to pyruvate. Is coupled to the respiratory chain. The protein is L-lactate dehydrogenase of Klebsiella pneumoniae (strain 342).